A 308-amino-acid chain; its full sequence is Oxygen-dependent coproporphyrinogen-III oxidase (308 aa).

A substrate-binding site is contributed by S100. Residues H104 and H114 each coordinate a divalent metal cation. H114 serves as the catalytic Proton donor. Residue 116–118 (NFR) participates in substrate binding. A divalent metal cation-binding residues include H153 and H183. Residues 248–283 (YVEFNLVFDRGTIFGLQSGGRTESILSSMPPMATWK) form an important for dimerization region. Residue 266–268 (GGR) participates in substrate binding.

Belongs to the aerobic coproporphyrinogen-III oxidase family. In terms of assembly, homodimer. A divalent metal cation serves as cofactor.

It localises to the cytoplasm. It catalyses the reaction coproporphyrinogen III + O2 + 2 H(+) = protoporphyrinogen IX + 2 CO2 + 2 H2O. It participates in porphyrin-containing compound metabolism; protoporphyrin-IX biosynthesis; protoporphyrinogen-IX from coproporphyrinogen-III (O2 route): step 1/1. Functionally, involved in the heme biosynthesis. Catalyzes the aerobic oxidative decarboxylation of propionate groups of rings A and B of coproporphyrinogen-III to yield the vinyl groups in protoporphyrinogen-IX. This Francisella tularensis subsp. mediasiatica (strain FSC147) protein is Oxygen-dependent coproporphyrinogen-III oxidase.